Here is a 548-residue protein sequence, read N- to C-terminus: Probable malate:quinone oxidoreductase (548 aa).

The protein belongs to the MQO family. FAD is required as a cofactor.

It carries out the reaction (S)-malate + a quinone = a quinol + oxaloacetate. Its pathway is carbohydrate metabolism; tricarboxylic acid cycle; oxaloacetate from (S)-malate (quinone route): step 1/1. This is Probable malate:quinone oxidoreductase from Escherichia coli (strain SE11).